The primary structure comprises 660 residues: MSAIESVLHETRQFAPPAALEQAATISGMPAYRALAAEAENDYEGFWARLAREGLAWHKPFTKVLDESNAPFYKWFEDGELNASYNCLDRHVEAGNGERVAVIFEADDGTVTRVTYADLLARVSRFANALKKRGIGKGDRVVIYIPMSIEGIVAMQACARIGATHSVVFGGFSAKSLNERLVDVGATALITADEQARGGKTLPLKSIADEAIALGGCEAVKSVIVYRRTGGKIDWHAERDLWMHELTAGESDQCEPEWVGAEHPLFILYTSGSTGKPKGVQHSTGGYLLWAAQTMKWTFDWKPTDVFWCTADIGWVTGHTYITYGPLACGGTQVVFEGVPTYPDAGRFWKMIGDHKVTVFYTAPTAIRSLIKAAEADDKVHPKSYDLSSLRIIGTVGEPINPEAWMWYHKHVGQERCPIVDTWWQTETGGHMITPLPGATPTVPGSCTLPLPGIMAAVVDETGQDVPNGQGGILVVKRPWPAMIRTIWGDPERFKKSYYPEELGGRLYLAGDGTVRDKDTGYFTIMGRIDDVLNVSGHRLGTMEIESALVSHELVAEAAVVGRPDDTTGEAVVAFVVLKRSRPEGEEAAALAKTLRDWVGKQIGPIAKPKDIRFGDNLPKTRSGKIMRRLLRSLAKGEAITQDTSTLENPAILDQLAEVR.

Residues 197–200 (RGGK) and Thr-317 each bind CoA. ATP-binding positions include 397–399 (GEP), 421–426 (DTWWQT), Asp-512, and Arg-528. Ser-536 contacts CoA. Arg-539 lines the ATP pocket. Mg(2+) is bound by residues Val-550, His-552, and Val-555. Lys-625 bears the N6-acetyllysine mark.

It belongs to the ATP-dependent AMP-binding enzyme family. It depends on Mg(2+) as a cofactor. In terms of processing, acetylated. Deacetylation by the SIR2-homolog deacetylase activates the enzyme.

The catalysed reaction is acetate + ATP + CoA = acetyl-CoA + AMP + diphosphate. In terms of biological role, catalyzes the conversion of acetate into acetyl-CoA (AcCoA), an essential intermediate at the junction of anabolic and catabolic pathways. AcsA undergoes a two-step reaction. In the first half reaction, AcsA combines acetate with ATP to form acetyl-adenylate (AcAMP) intermediate. In the second half reaction, it can then transfer the acetyl group from AcAMP to the sulfhydryl group of CoA, forming the product AcCoA. The sequence is that of Acetyl-coenzyme A synthetase from Burkholderia lata (strain ATCC 17760 / DSM 23089 / LMG 22485 / NCIMB 9086 / R18194 / 383).